Consider the following 197-residue polypeptide: NADH-quinone oxidoreductase subunit C (197 aa).

It belongs to the complex I 30 kDa subunit family. As to quaternary structure, NDH-1 is composed of 14 different subunits. Subunits NuoB, C, D, E, F, and G constitute the peripheral sector of the complex.

Its subcellular location is the cell inner membrane. The enzyme catalyses a quinone + NADH + 5 H(+)(in) = a quinol + NAD(+) + 4 H(+)(out). NDH-1 shuttles electrons from NADH, via FMN and iron-sulfur (Fe-S) centers, to quinones in the respiratory chain. The immediate electron acceptor for the enzyme in this species is believed to be ubiquinone. Couples the redox reaction to proton translocation (for every two electrons transferred, four hydrogen ions are translocated across the cytoplasmic membrane), and thus conserves the redox energy in a proton gradient. This chain is NADH-quinone oxidoreductase subunit C, found in Rickettsia prowazekii (strain Madrid E).